Consider the following 404-residue polypeptide: Cysteine desulfurase IscS (404 aa).

Residues 75–76 (AT), Asn-155, Gln-183, and 203–205 (SGH) each bind pyridoxal 5'-phosphate. Lys-206 carries the post-translational modification N6-(pyridoxal phosphate)lysine. Thr-243 lines the pyridoxal 5'-phosphate pocket. The active-site Cysteine persulfide intermediate is the Cys-328. Position 328 (Cys-328) interacts with [2Fe-2S] cluster.

The protein belongs to the class-V pyridoxal-phosphate-dependent aminotransferase family. NifS/IscS subfamily. In terms of assembly, homodimer. Forms a heterotetramer with IscU, interacts with other sulfur acceptors. Requires pyridoxal 5'-phosphate as cofactor.

It localises to the cytoplasm. It catalyses the reaction (sulfur carrier)-H + L-cysteine = (sulfur carrier)-SH + L-alanine. Its pathway is cofactor biosynthesis; iron-sulfur cluster biosynthesis. Functionally, master enzyme that delivers sulfur to a number of partners involved in Fe-S cluster assembly, tRNA modification or cofactor biosynthesis. Catalyzes the removal of elemental sulfur atoms from cysteine to produce alanine. Functions as a sulfur delivery protein for Fe-S cluster synthesis onto IscU, an Fe-S scaffold assembly protein, as well as other S acceptor proteins. This chain is Cysteine desulfurase IscS, found in Shewanella frigidimarina (strain NCIMB 400).